Reading from the N-terminus, the 260-residue chain is Hydroxyethylthiazole kinase 1 (260 aa).

Met-39 provides a ligand contact to substrate. Positions 115 and 160 each coordinate ATP. Gly-187 is a substrate binding site.

This sequence belongs to the Thz kinase family. Mg(2+) is required as a cofactor.

The enzyme catalyses 5-(2-hydroxyethyl)-4-methylthiazole + ATP = 4-methyl-5-(2-phosphooxyethyl)-thiazole + ADP + H(+). Its pathway is cofactor biosynthesis; thiamine diphosphate biosynthesis; 4-methyl-5-(2-phosphoethyl)-thiazole from 5-(2-hydroxyethyl)-4-methylthiazole: step 1/1. Functionally, catalyzes the phosphorylation of the hydroxyl group of 4-methyl-5-beta-hydroxyethylthiazole (THZ). This is Hydroxyethylthiazole kinase 1 from Streptococcus pneumoniae (strain Taiwan19F-14).